A 953-amino-acid polypeptide reads, in one-letter code: Lysosomal alpha-glucosidase (953 aa).

The first 27 residues, 1-27, serve as a signal peptide directing secretion; sequence MNIRKPLCSNSVVGACTLVSLTTAVIL. Positions 28–69 are excised as a propeptide; the sequence is GHLMLRELMLLPQDLHESSSGLWKTYRPHHQESYEPAPLHIQ. In terms of domain architecture, P-type spans 80 to 131; sequence TQCDVTPNSRFDCAPDKGITQEQCEARGCCWVPAGQVLNGPVMGQPWCFFPP. Intrachain disulfides connect Cys-82–Cys-109, Cys-92–Cys-108, and Cys-103–Cys-127. Residues Asn-140, Asn-233, and Asn-390 are each glycosylated (N-linked (GlcNAc...) asparagine). Asp-404 serves as a coordination point for substrate. Residue Asn-470 is glycosylated (N-linked (GlcNAc...) asparagine). Asp-518 serves as the catalytic Nucleophile. The active site involves Glu-521. A disulfide bridge links Cys-533 with Cys-558. Residues Arg-600 and Asp-616 each coordinate substrate. Cys-647 and Cys-658 are oxidised to a cystine. An N-linked (GlcNAc...) asparagine glycan is attached at Asn-652. Substrate is bound at residue His-674. 2 N-linked (GlcNAc...) asparagine glycosylation sites follow: Asn-883 and Asn-926.

Belongs to the glycosyl hydrolase 31 family.

It localises to the lysosome. The protein localises to the lysosome membrane. The catalysed reaction is Hydrolysis of terminal, non-reducing (1-&gt;4)-linked alpha-D-glucose residues with release of alpha-D-glucose.. Its function is as follows. Essential for the degradation of glycogen in lysosomes. Has highest activity on alpha-1,4-linked glycosidic linkages, but can also hydrolyze alpha-1,6-linked glucans. This is Lysosomal alpha-glucosidase (Gaa) from Rattus norvegicus (Rat).